The chain runs to 108 residues: uncharacterized protein (108 aa).

A signal peptide spans 1-21; sequence MFRSLFLAAALMAFTPLAANA.

This sequence to E.coli YaaX.

This is an uncharacterized protein from Escherichia coli O157:H7.